A 306-amino-acid polypeptide reads, in one-letter code: Transcription initiation factor IIB (306 aa).

A run of 2 repeats spans residues 122–205 and 216–297.

The protein belongs to the TFIIB family.

Functionally, stabilizes TBP binding to an archaeal box-A promoter. Also responsible for recruiting RNA polymerase II to the pre-initiation complex (DNA-TBP-TFIIB). In Saccharolobus shibatae (strain ATCC 51178 / DSM 5389 / JCM 8931 / NBRC 15437 / B12) (Sulfolobus shibatae), this protein is Transcription initiation factor IIB.